Here is a 433-residue protein sequence, read N- to C-terminus: Acetylcholine receptor-like protein cup-4 (433 aa).

The N-terminal stretch at 1 to 24 (MKIIIFVCFILIFYLPIQKKHVNS) is a signal peptide. 2 N-linked (GlcNAc...) asparagine glycosylation sites follow: Asn-41 and Asn-68. Residues Cys-178 and Cys-192 are joined by a disulfide bond. 2 N-linked (GlcNAc...) asparagine glycosylation sites follow: Asn-237 and Asn-249. A run of 4 helical transmembrane segments spans residues 282–302 (EAAV…TFFI), 307–327 (STFL…HDLV), 337–357 (IPFC…TLVL), and 413–433 (PIIG…CLLL).

This sequence belongs to the ligand-gated ion channel (TC 1.A.9) family. Acetylcholine receptor (TC 1.A.9.1) subfamily. Expressed in coelomocytes.

It localises to the cytoplasmic vesicle membrane. Functionally, thought to regulate endocytosis in coelomocytes through modulation of phospholipase C activity. Possible acetylcholine receptor. This is Acetylcholine receptor-like protein cup-4 (cup-4) from Caenorhabditis elegans.